Reading from the N-terminus, the 137-residue chain is Translation initiation factor 2 subunit beta (137 aa).

It belongs to the eIF-2-beta/eIF-5 family. As to quaternary structure, heterotrimer composed of an alpha, a beta and a gamma chain.

In terms of biological role, eIF-2 functions in the early steps of protein synthesis by forming a ternary complex with GTP and initiator tRNA. The sequence is that of Translation initiation factor 2 subunit beta (eif2b) from Archaeoglobus fulgidus (strain ATCC 49558 / DSM 4304 / JCM 9628 / NBRC 100126 / VC-16).